We begin with the raw amino-acid sequence, 698 residues long: Testis-specific gene 10 protein (698 aa).

Phosphoserine is present on Ser163. Positions 556–689 are interaction with HIF1A; the sequence is QMANERISMQ…SPDRGLDRSL (134 aa). Polar residues predominate over residues 659–670; sequence HMSSTMKPNTKC. Positions 659-685 are disordered; the sequence is HMSSTMKPNTKCHSPERAHHRSPDRGL. The span at 671–685 shows a compositional bias: basic and acidic residues; the sequence is HSPERAHHRSPDRGL. Ser688 is subject to Phosphoserine.

The protein belongs to the CEP135/TSGA10 family. Interacts with HIF1A. Post-translationally, processed into N-terminal 27-kDa and C-terminal 55-kDa fragments. Expressed in the testis, in spermatozoa (at protein level). Expressed in actively dividing fetal tissues, including sternum, intestine, limb, kidney and stomach.

The protein localises to the cytoplasm. The protein resides in the cytoskeleton. Its subcellular location is the microtubule organizing center. It is found in the centrosome. It localises to the centriole. In terms of biological role, plays a role in spermatogenesis. When overexpressed, prevents nuclear localization of HIF1A. The sequence is that of Testis-specific gene 10 protein (TSGA10) from Homo sapiens (Human).